A 289-amino-acid chain; its full sequence is Oxygen-dependent coproporphyrinogen-III oxidase (289 aa).

Ser82 is a binding site for substrate. Positions 86 and 96 each coordinate a divalent metal cation. His96 serves as the catalytic Proton donor. Asn98 to Arg100 serves as a coordination point for substrate. Positions 130 and 160 each coordinate a divalent metal cation. The tract at residues Tyr224–Glu259 is important for dimerization.

It belongs to the aerobic coproporphyrinogen-III oxidase family. In terms of assembly, homodimer. A divalent metal cation is required as a cofactor.

It localises to the cytoplasm. It catalyses the reaction coproporphyrinogen III + O2 + 2 H(+) = protoporphyrinogen IX + 2 CO2 + 2 H2O. Its pathway is porphyrin-containing compound metabolism; protoporphyrin-IX biosynthesis; protoporphyrinogen-IX from coproporphyrinogen-III (O2 route): step 1/1. Functionally, involved in the heme and chlorophyll biosynthesis. Catalyzes the aerobic oxidative decarboxylation of propionate groups of rings A and B of coproporphyrinogen-III to yield the vinyl groups in protoporphyrinogen-IX. This chain is Oxygen-dependent coproporphyrinogen-III oxidase, found in Gloeobacter violaceus (strain ATCC 29082 / PCC 7421).